The chain runs to 527 residues: Peptide chain release factor 3 (527 aa).

One can recognise a tr-type G domain in the interval 9–277; the sequence is AKRRTFAIIS…CIVDWAPQPL (269 aa). GTP contacts are provided by residues 18-25, 86-90, and 140-143; these read SHPDAGKT, DTPGH, and NKLD.

The protein belongs to the TRAFAC class translation factor GTPase superfamily. Classic translation factor GTPase family. PrfC subfamily.

The protein resides in the cytoplasm. Increases the formation of ribosomal termination complexes and stimulates activities of RF-1 and RF-2. It binds guanine nucleotides and has strong preference for UGA stop codons. It may interact directly with the ribosome. The stimulation of RF-1 and RF-2 is significantly reduced by GTP and GDP, but not by GMP. The polypeptide is Peptide chain release factor 3 (Pseudomonas paraeruginosa (strain DSM 24068 / PA7) (Pseudomonas aeruginosa (strain PA7))).